Reading from the N-terminus, the 415-residue chain is Glutamyl-tRNA reductase (415 aa).

Substrate is bound by residues 49–52 (TCNR), Ser-106, 111–113 (EPQ), and Gln-117. The active-site Nucleophile is Cys-50. 186–191 (GAGETI) is an NADP(+) binding site.

Belongs to the glutamyl-tRNA reductase family. Homodimer.

The enzyme catalyses (S)-4-amino-5-oxopentanoate + tRNA(Glu) + NADP(+) = L-glutamyl-tRNA(Glu) + NADPH + H(+). It participates in porphyrin-containing compound metabolism; protoporphyrin-IX biosynthesis; 5-aminolevulinate from L-glutamyl-tRNA(Glu): step 1/2. In terms of biological role, catalyzes the NADPH-dependent reduction of glutamyl-tRNA(Glu) to glutamate 1-semialdehyde (GSA). The chain is Glutamyl-tRNA reductase from Teredinibacter turnerae (strain ATCC 39867 / T7901).